A 146-amino-acid chain; its full sequence is ATP synthase epsilon chain (146 aa).

The segment at 103 to 124 is disordered; the sequence is QAERELGQLPEEEDEDSRRARE.

Belongs to the ATPase epsilon chain family. F-type ATPases have 2 components, CF(1) - the catalytic core - and CF(0) - the membrane proton channel. CF(1) has five subunits: alpha(3), beta(3), gamma(1), delta(1), epsilon(1). CF(0) has three main subunits: a, b and c.

The protein localises to the cell membrane. In terms of biological role, produces ATP from ADP in the presence of a proton gradient across the membrane. The polypeptide is ATP synthase epsilon chain (Rubrobacter xylanophilus (strain DSM 9941 / JCM 11954 / NBRC 16129 / PRD-1)).